The chain runs to 193 residues: Acyl carrier protein phosphodiesterase (193 aa).

This sequence belongs to the AcpH family.

It catalyses the reaction holo-[ACP] + H2O = apo-[ACP] + (R)-4'-phosphopantetheine + H(+). In terms of biological role, converts holo-ACP to apo-ACP by hydrolytic cleavage of the phosphopantetheine prosthetic group from ACP. This is Acyl carrier protein phosphodiesterase from Salmonella dublin (strain CT_02021853).